Consider the following 141-residue polypeptide: Large ribosomal subunit protein uL13 (141 aa).

Belongs to the universal ribosomal protein uL13 family. Part of the 50S ribosomal subunit.

Its function is as follows. This protein is one of the early assembly proteins of the 50S ribosomal subunit, although it is not seen to bind rRNA by itself. It is important during the early stages of 50S assembly. The protein is Large ribosomal subunit protein uL13 of Helicobacter pylori (strain Shi470).